Consider the following 246-residue polypeptide: Probable transcriptional regulatory protein YebC (246 aa).

Positions 1–20 (MAGHSKWANTRHRKAAQDAK) are disordered.

It belongs to the TACO1 family.

The protein localises to the cytoplasm. The polypeptide is Probable transcriptional regulatory protein YebC (Salmonella typhimurium (strain LT2 / SGSC1412 / ATCC 700720)).